The following is a 275-amino-acid chain: MSQSPQSIIEQAWENRANLSPESAPADIRSAVNAVLEGLNAGTIRVAERRDVGKWEVNQWVKKAVLLSFRLEDNKPMGAGGYTQFYDKVPSKFENYTAADFAAGGFRVVPPAVARRGSFIGKNAVLMPSYVNIGAYVGEGTMVDTWATVGSCAQIGKNVHLSGGVGIGGVLEPIQAGPVIIEDNCFIGARSEVVEGVVIEENAVLSMGVYIGQSTKIYDRETGEVHYGRVPAGSVVVPGSLPSACGKYSLYAAIIVKKVDAQTRAKTAINELLRD.

Positions 107 and 144 each coordinate substrate.

This sequence belongs to the transferase hexapeptide repeat family. Homotrimer.

The protein resides in the cytoplasm. It carries out the reaction (S)-2,3,4,5-tetrahydrodipicolinate + succinyl-CoA + H2O = (S)-2-succinylamino-6-oxoheptanedioate + CoA. It participates in amino-acid biosynthesis; L-lysine biosynthesis via DAP pathway; LL-2,6-diaminopimelate from (S)-tetrahydrodipicolinate (succinylase route): step 1/3. The protein is 2,3,4,5-tetrahydropyridine-2,6-dicarboxylate N-succinyltransferase of Polynucleobacter asymbioticus (strain DSM 18221 / CIP 109841 / QLW-P1DMWA-1) (Polynucleobacter necessarius subsp. asymbioticus).